The sequence spans 299 residues: MVEVIDGKLIAASVIQTVKSATAALEMVSGVTTGLAVIIVGDDPASHAYVGSKSRMAKECGFKSVQHTLPAETTQEELAGLVATLNADPSIHGILVQLPLPKPLDSEPIIQSILPEKDVDGLSVVNAGKLATGDLKTGLVSCTPAGAMVFVRRTHGEDLSGLNAVVIGRSNLFGKPMAQLLLNANATVTIAHSRTKNLAEVCRNADILVAAVGRPEMVKADWVKPGATVIDVGINRVPAPEKGEGKTRLVGDVAFREVSEIAGTITPVPGGVGPMTIAMLMANTVIAAHRAAGQVPPKF.

Residues 168 to 170 (GRS), Ser-193, and Ile-234 each bind NADP(+).

Belongs to the tetrahydrofolate dehydrogenase/cyclohydrolase family. As to quaternary structure, homodimer.

It carries out the reaction (6R)-5,10-methylene-5,6,7,8-tetrahydrofolate + NADP(+) = (6R)-5,10-methenyltetrahydrofolate + NADPH. The catalysed reaction is (6R)-5,10-methenyltetrahydrofolate + H2O = (6R)-10-formyltetrahydrofolate + H(+). It functions in the pathway one-carbon metabolism; tetrahydrofolate interconversion. Catalyzes the oxidation of 5,10-methylenetetrahydrofolate to 5,10-methenyltetrahydrofolate and then the hydrolysis of 5,10-methenyltetrahydrofolate to 10-formyltetrahydrofolate. In Rhizobium etli (strain ATCC 51251 / DSM 11541 / JCM 21823 / NBRC 15573 / CFN 42), this protein is Bifunctional protein FolD 2.